The chain runs to 311 residues: Purine nucleoside phosphorylase (311 aa).

Serine 2 carries the N-acetylserine modification. Phosphate-binding positions include serine 46, histidine 81, arginine 101–histidine 103, and alanine 134. A purine D-ribonucleoside is bound at residue glutamate 219. A phosphate-binding site is contributed by serine 238. Asparagine 261 contacts a purine D-ribonucleoside. A Phosphoserine modification is found at serine 275.

Belongs to the PNP/MTAP phosphorylase family.

It carries out the reaction a purine D-ribonucleoside + phosphate = a purine nucleobase + alpha-D-ribose 1-phosphate. It functions in the pathway purine metabolism; purine nucleoside salvage. The purine nucleoside phosphorylases catalyze the phosphorolytic breakdown of the N-glycosidic bond in the beta-(deoxy)ribonucleoside molecules, with the formation of the corresponding free purine bases and pentose-1-phosphate. Cleaves guanosine and inosine. In Saccharomyces cerevisiae (strain ATCC 204508 / S288c) (Baker's yeast), this protein is Purine nucleoside phosphorylase (PNP1).